Here is a 343-residue protein sequence, read N- to C-terminus: Photosystem II protein D1 (343 aa).

A run of 3 helical transmembrane segments spans residues 28–45 (YIGWFGVLLFPLIAVSTV), 117–132 (HFLAAVLAWLGREYEY), and 141–155 (WIYLAFSAPVVAASA). H117 serves as a coordination point for chlorophyll a. Pheophytin a is bound at residue W125. Positions 169 and 188 each coordinate [CaMn4O5] cluster. A helical transmembrane segment spans residues 196-217 (FHILGVSAVFGGSLFSAMHGSL). Residue H197 participates in chlorophyll a binding. Residues H214 and 263 to 264 (SF) contribute to the a quinone site. H214 serves as a coordination point for Fe cation. A Fe cation-binding site is contributed by H271. Residues 273-287 (FLAAWPVIGIWCTAI) traverse the membrane as a helical segment. Residues H331, E332, D341, and A343 each coordinate [CaMn4O5] cluster.

This sequence belongs to the reaction center PufL/M/PsbA/D family. As to quaternary structure, PSII is composed of 1 copy each of membrane proteins PsbA, PsbB, PsbC, PsbD, PsbE, PsbF, PsbH, PsbI, PsbJ, PsbK, PsbL, PsbM, PsbT, PsbX, PsbY, PsbZ, Psb30/Ycf12, at least 3 peripheral proteins of the oxygen-evolving complex and a large number of cofactors. It forms dimeric complexes. It depends on The D1/D2 heterodimer binds P680, chlorophylls that are the primary electron donor of PSII, and subsequent electron acceptors. It shares a non-heme iron and each subunit binds pheophytin, quinone, additional chlorophylls, carotenoids and lipids. D1 provides most of the ligands for the Mn4-Ca-O5 cluster of the oxygen-evolving complex (OEC). There is also a Cl(-1) ion associated with D1 and D2, which is required for oxygen evolution. The PSII complex binds additional chlorophylls, carotenoids and specific lipids. as a cofactor. In terms of processing, tyr-160 forms a radical intermediate that is referred to as redox-active TyrZ, YZ or Y-Z.

It localises to the plastid. Its subcellular location is the chloroplast thylakoid membrane. It carries out the reaction 2 a plastoquinone + 4 hnu + 2 H2O = 2 a plastoquinol + O2. Functionally, photosystem II (PSII) is a light-driven water:plastoquinone oxidoreductase that uses light energy to abstract electrons from H(2)O, generating O(2) and a proton gradient subsequently used for ATP formation. It consists of a core antenna complex that captures photons, and an electron transfer chain that converts photonic excitation into a charge separation. The D1/D2 (PsbA/PsbD) reaction center heterodimer binds P680, the primary electron donor of PSII as well as several subsequent electron acceptors. The protein is Photosystem II protein D1 of Prorocentrum micans (Red tide dinoflagellate).